The sequence spans 116 residues: Bifunctional protein GlmU (116 aa).

Lys8 is a binding site for acetyl-CoA. Residue His20 is the Proton acceptor of the active site. Residues Tyr23, Asn34, 43–44 (NY), Ala80, and Arg97 each bind acetyl-CoA.

The protein in the N-terminal section; belongs to the N-acetylglucosamine-1-phosphate uridyltransferase family. This sequence in the C-terminal section; belongs to the transferase hexapeptide repeat family. The cofactor is Mg(2+).

The protein localises to the cytoplasm. It catalyses the reaction alpha-D-glucosamine 1-phosphate + acetyl-CoA = N-acetyl-alpha-D-glucosamine 1-phosphate + CoA + H(+). It carries out the reaction N-acetyl-alpha-D-glucosamine 1-phosphate + UTP + H(+) = UDP-N-acetyl-alpha-D-glucosamine + diphosphate. The protein operates within nucleotide-sugar biosynthesis; UDP-N-acetyl-alpha-D-glucosamine biosynthesis; N-acetyl-alpha-D-glucosamine 1-phosphate from alpha-D-glucosamine 6-phosphate (route II): step 2/2. Its pathway is nucleotide-sugar biosynthesis; UDP-N-acetyl-alpha-D-glucosamine biosynthesis; UDP-N-acetyl-alpha-D-glucosamine from N-acetyl-alpha-D-glucosamine 1-phosphate: step 1/1. It participates in bacterial outer membrane biogenesis; LPS lipid A biosynthesis. In terms of biological role, catalyzes the last two sequential reactions in the de novo biosynthetic pathway for UDP-N-acetylglucosamine (UDP-GlcNAc). The C-terminal domain catalyzes the transfer of acetyl group from acetyl coenzyme A to glucosamine-1-phosphate (GlcN-1-P) to produce N-acetylglucosamine-1-phosphate (GlcNAc-1-P), which is converted into UDP-GlcNAc by the transfer of uridine 5-monophosphate (from uridine 5-triphosphate), a reaction catalyzed by the N-terminal domain. In Bacillus caldolyticus, this protein is Bifunctional protein GlmU (glmU).